Here is a 243-residue protein sequence, read N- to C-terminus: MIREIFNSIMGEGKYIGRRFIFVRFAGCPLNCVYCDEESKGYFNRVEKIPGSGEFETLQKMEIEDIINAIDKLKTPDLFAVSFTGGEPLLYHKQIKEIAEILKDKGYRTFLESNGMFPERIFYFDIASIDIKLKEHFEYIKDEDYEKLYKNELKTIKKLYNLNSDIYAKVVIMEETNIEDVKIIAKDLSDIGNITLCIQPVTPHGNIKSPSQRKLFEIMEACGEYLKDNVMLTIQMHKYLGML.

Residues 9–11 (IMG) and R24 each bind substrate. In terms of domain architecture, Radical SAM core spans 15–243 (YIGRRFIFVR…IQMHKYLGML (229 aa)). [4Fe-4S] cluster contacts are provided by C28, C32, and C35. Substrate is bound at residue T84. G86 is a binding site for S-adenosyl-L-methionine.

The protein belongs to the radical SAM superfamily. 7-carboxy-7-deazaguanine synthase family. As to quaternary structure, homodimer. [4Fe-4S] cluster serves as cofactor. It depends on S-adenosyl-L-methionine as a cofactor. Requires Mg(2+) as cofactor.

It catalyses the reaction 6-carboxy-5,6,7,8-tetrahydropterin + H(+) = 7-carboxy-7-deazaguanine + NH4(+). The protein operates within purine metabolism; 7-cyano-7-deazaguanine biosynthesis. Catalyzes the complex heterocyclic radical-mediated conversion of 6-carboxy-5,6,7,8-tetrahydropterin (CPH4) to 7-carboxy-7-deazaguanine (CDG), a step common to the biosynthetic pathways of all 7-deazapurine-containing compounds. This Methanocaldococcus jannaschii (strain ATCC 43067 / DSM 2661 / JAL-1 / JCM 10045 / NBRC 100440) (Methanococcus jannaschii) protein is 7-carboxy-7-deazaguanine synthase.